A 316-amino-acid polypeptide reads, in one-letter code: MSDISKASLPKAIFLMGPTASGKTALAIELRKILPVELISVDSALIYKGMDIGTAKPNAEELLAAPHRLLDIRDPSQAYSAADFRRDALAEMADITAAGRIPLLVGGTMLYFKALLEGLSPLPSADPEVRARIEQQAAEQGWESLHRQLQEVDPVAAARIHPNDPQRLSRALEVFFISGKTLTELTQTSGDALPYQVHQFAIAPASRELLHQRIEQRFHQMLASGFEAEVRALFARGDLHTDLPSIRCVGYRQMWSYLEGEISYDEMVYLGVCATRQLAKRQITWLRGWEGVHWLDSEKPEQARDEVLQVVGAIAG.

Glycine 17–threonine 24 provides a ligand contact to ATP. Threonine 19 to threonine 24 contributes to the substrate binding site. 4 interaction with substrate tRNA regions span residues aspartate 42–leucine 45, glutamine 166–arginine 170, arginine 247–arginine 252, and lysine 280–arginine 287.

It belongs to the IPP transferase family. Monomer. Mg(2+) is required as a cofactor.

The catalysed reaction is adenosine(37) in tRNA + dimethylallyl diphosphate = N(6)-dimethylallyladenosine(37) in tRNA + diphosphate. In terms of biological role, catalyzes the transfer of a dimethylallyl group onto the adenine at position 37 in tRNAs that read codons beginning with uridine, leading to the formation of N6-(dimethylallyl)adenosine (i(6)A). The sequence is that of tRNA dimethylallyltransferase from Shigella dysenteriae serotype 1 (strain Sd197).